A 467-amino-acid polypeptide reads, in one-letter code: Light-independent protochlorophyllide reductase subunit N (467 aa).

3 residues coordinate [4Fe-4S] cluster: cysteine 24, cysteine 49, and cysteine 109.

It belongs to the BchN/ChlN family. Protochlorophyllide reductase is composed of three subunits; ChlL, ChlN and ChlB. Forms a heterotetramer of two ChlB and two ChlN subunits. [4Fe-4S] cluster is required as a cofactor.

The enzyme catalyses chlorophyllide a + oxidized 2[4Fe-4S]-[ferredoxin] + 2 ADP + 2 phosphate = protochlorophyllide a + reduced 2[4Fe-4S]-[ferredoxin] + 2 ATP + 2 H2O. It functions in the pathway porphyrin-containing compound metabolism; chlorophyll biosynthesis (light-independent). Component of the dark-operative protochlorophyllide reductase (DPOR) that uses Mg-ATP and reduced ferredoxin to reduce ring D of protochlorophyllide (Pchlide) to form chlorophyllide a (Chlide). This reaction is light-independent. The NB-protein (ChlN-ChlB) is the catalytic component of the complex. The chain is Light-independent protochlorophyllide reductase subunit N from Leptolyngbya boryana (Plectonema boryanum).